A 358-amino-acid chain; its full sequence is Probable branched-chain-amino-acid aminotransferase (358 aa).

Residue K196 is modified to N6-(pyridoxal phosphate)lysine.

The protein belongs to the class-IV pyridoxal-phosphate-dependent aminotransferase family. It depends on pyridoxal 5'-phosphate as a cofactor.

It carries out the reaction L-leucine + 2-oxoglutarate = 4-methyl-2-oxopentanoate + L-glutamate. The enzyme catalyses L-isoleucine + 2-oxoglutarate = (S)-3-methyl-2-oxopentanoate + L-glutamate. It catalyses the reaction L-valine + 2-oxoglutarate = 3-methyl-2-oxobutanoate + L-glutamate. Its pathway is amino-acid biosynthesis; L-isoleucine biosynthesis; L-isoleucine from 2-oxobutanoate: step 4/4. It participates in amino-acid biosynthesis; L-leucine biosynthesis; L-leucine from 3-methyl-2-oxobutanoate: step 4/4. It functions in the pathway amino-acid biosynthesis; L-valine biosynthesis; L-valine from pyruvate: step 4/4. Acts on leucine, isoleucine and valine. The protein is Probable branched-chain-amino-acid aminotransferase (ilvE) of Staphylococcus aureus (strain MRSA252).